A 96-amino-acid polypeptide reads, in one-letter code: UPF0235 protein YpsIP31758_0827 (96 aa).

It belongs to the UPF0235 family.

The polypeptide is UPF0235 protein YpsIP31758_0827 (Yersinia pseudotuberculosis serotype O:1b (strain IP 31758)).